Reading from the N-terminus, the 334-residue chain is Ribonucleoside-diphosphate reductase small chain (334 aa).

Asp-77, Glu-108, and His-111 together coordinate Fe cation. Residue Tyr-115 is part of the active site. Positions 171, 205, and 208 each coordinate Fe cation.

This sequence belongs to the ribonucleoside diphosphate reductase small chain family. As to quaternary structure, heterotetramer composed of a homodimer of the large subunit (R1) and a homodimer of the small subunit (R2). Larger multisubunit protein complex are also active, composed of (R1)n(R2)n. Requires Fe cation as cofactor.

It carries out the reaction a 2'-deoxyribonucleoside 5'-diphosphate + [thioredoxin]-disulfide + H2O = a ribonucleoside 5'-diphosphate + [thioredoxin]-dithiol. Ribonucleoside-diphosphate reductase holoenzyme provides the precursors necessary for viral DNA synthesis. Allows virus growth in non-dividing cells. Catalyzes the biosynthesis of deoxyribonucleotides from the corresponding ribonucleotides. In Ornithodoros (relapsing fever ticks), this protein is Ribonucleoside-diphosphate reductase small chain.